Reading from the N-terminus, the 427-residue chain is Acetylornithine aminotransferase, mitochondrial (427 aa).

K279 carries the post-translational modification N6-(pyridoxal phosphate)lysine.

It belongs to the class-III pyridoxal-phosphate-dependent aminotransferase family. It depends on pyridoxal 5'-phosphate as a cofactor.

It localises to the mitochondrion matrix. It carries out the reaction N(2)-acetyl-L-ornithine + 2-oxoglutarate = N-acetyl-L-glutamate 5-semialdehyde + L-glutamate. It participates in amino-acid biosynthesis; L-arginine biosynthesis; N(2)-acetyl-L-ornithine from L-glutamate: step 4/4. The chain is Acetylornithine aminotransferase, mitochondrial (ARG8) from Candida glabrata (strain ATCC 2001 / BCRC 20586 / JCM 3761 / NBRC 0622 / NRRL Y-65 / CBS 138) (Yeast).